A 519-amino-acid polypeptide reads, in one-letter code: Signal transduction histidine-protein kinase/phosphatase MprB (519 aa).

Residues 1-26 are Cytoplasmic-facing; sequence MVRFAWRRRASLRATSSLSLRWRVML. Residues 27–47 traverse the membrane as a helical segment; sequence LAMSMVAMVVVLMAFAVYVVI. Residues 48 to 163 lie on the Extracellular side of the membrane; that stretch reads SAALYSDIDN…PTEAVMTKLR (116 aa). Residues 164–184 form a helical membrane-spanning segment; that stretch reads WVLLIVGSLGVAVAAVAGGMV. Residues 185-519 are Cytoplasmic-facing; sequence TRAGLRPVGR…SVDYQSARAR (335 aa). In terms of domain architecture, HAMP spans 186–238; sequence RAGLRPVGRLTEAAERVARTDDLRPIPVFGSDELARLTEAFNLMLRALAESRE. Residues 246 to 466 enclose the Histidine kinase domain; sequence DAGHELRTPL…SIYVLLPGRP (221 aa). The residue at position 249 (His-249) is a Phosphohistidine; by autocatalysis.

It depends on Mg(2+) as a cofactor. Requires Mn(2+) as cofactor. In terms of processing, autophosphorylated.

Its subcellular location is the cell membrane. It carries out the reaction ATP + protein L-histidine = ADP + protein N-phospho-L-histidine.. In terms of biological role, member of the two-component regulatory system MprB/MprA which contributes to maintaining a balance among several systems involved in stress resistance and is required for establishment and maintenance of persistent infection in the host. In response to environmental signals MprB acts both as a membrane-associated protein kinase that undergoes autophosphorylation and subsequently transfers the phosphate to MprA, and a protein phosphatase that dephosphorylates phospho-MprA. The chain is Signal transduction histidine-protein kinase/phosphatase MprB (mprB) from Mycobacterium leprae (strain TN).